Here is a 132-residue protein sequence, read N- to C-terminus: Phosphoribosyl-AMP cyclohydrolase (132 aa).

Residue Asp81 participates in Mg(2+) binding. Cys82 provides a ligand contact to Zn(2+). The Mg(2+) site is built by Asp83 and Asp85. 2 residues coordinate Zn(2+): Cys99 and Cys106.

It belongs to the PRA-CH family. Homodimer. Mg(2+) is required as a cofactor. The cofactor is Zn(2+).

It is found in the cytoplasm. It carries out the reaction 1-(5-phospho-beta-D-ribosyl)-5'-AMP + H2O = 1-(5-phospho-beta-D-ribosyl)-5-[(5-phospho-beta-D-ribosylamino)methylideneamino]imidazole-4-carboxamide. The protein operates within amino-acid biosynthesis; L-histidine biosynthesis; L-histidine from 5-phospho-alpha-D-ribose 1-diphosphate: step 3/9. Catalyzes the hydrolysis of the adenine ring of phosphoribosyl-AMP. This is Phosphoribosyl-AMP cyclohydrolase from Chromobacterium violaceum (strain ATCC 12472 / DSM 30191 / JCM 1249 / CCUG 213 / NBRC 12614 / NCIMB 9131 / NCTC 9757 / MK).